The following is a 394-amino-acid chain: Argininosuccinate synthase (394 aa).

8-16 serves as a coordination point for ATP; it reads AYSGGLDTS. L-citrulline-binding residues include Tyr86 and Ser91. ATP is bound at residue Gly116. Thr118, Asn122, and Asp123 together coordinate L-aspartate. Residue Asn122 participates in L-citrulline binding. L-citrulline contacts are provided by Arg126, Ser172, Ser181, Glu257, and Tyr269.

Belongs to the argininosuccinate synthase family. Type 1 subfamily. Homotetramer.

The protein resides in the cytoplasm. The enzyme catalyses L-citrulline + L-aspartate + ATP = 2-(N(omega)-L-arginino)succinate + AMP + diphosphate + H(+). Its pathway is amino-acid biosynthesis; L-arginine biosynthesis; L-arginine from L-ornithine and carbamoyl phosphate: step 2/3. This chain is Argininosuccinate synthase, found in Methanosarcina acetivorans (strain ATCC 35395 / DSM 2834 / JCM 12185 / C2A).